The sequence spans 93 residues: Defensin 5 (93 aa).

Positions M1 to A19 are cleaved as a signal peptide. A propeptide spanning residues E20–V58 is cleaved from the precursor. Intrachain disulfides connect C64/C92, C66/C81, and C71/C91.

It belongs to the alpha-defensin family. Small intestine. Not present in heart, liver, spleen, kidney, large intestine and colon.

It is found in the secreted. Its function is as follows. Probably contributes to the antimicrobial barrier function of the small intestine. The sequence is that of Defensin 5 from Rattus norvegicus (Rat).